The following is a 294-amino-acid chain: 2-oxo-3-(phosphooxy)propyl 3-oxoalkanoate synthase (294 aa).

Belongs to the AfsA family.

It catalyses the reaction a medium-chain 3-oxoacyl-[ACP] + dihydroxyacetone phosphate = a (4-alkanoyl-5-oxo-2,5-dihydrofuran-3-yl)methyl phosphate + holo-[ACP] + H2O. In terms of biological role, involved in the biosynthesis of virginiae butanolide (VB), a gamma-butyrolactone autoregulator that triggers the production of the streptogramin antibiotic virginiamycin. This chain is 2-oxo-3-(phosphooxy)propyl 3-oxoalkanoate synthase, found in Streptomyces virginiae (Streptomyces cinnamonensis).